A 487-amino-acid polypeptide reads, in one-letter code: 4-alpha-glucanotransferase (487 aa).

This sequence belongs to the disproportionating enzyme family.

It is found in the cytoplasm. It catalyses the reaction Transfers a segment of a (1-&gt;4)-alpha-D-glucan to a new position in an acceptor, which may be glucose or a (1-&gt;4)-alpha-D-glucan.. In terms of biological role, catalyzes a disproportionation reaction in which single or multiple glucose units from oligosaccharides are transferred to the 4-hydroxyl group of acceptor sugars. Glucose, maltose and maltotriose can act as acceptor, whereas of the three only maltotriose can act as donor. The chain is 4-alpha-glucanotransferase (malQ) from Clostridium butyricum.